A 241-amino-acid chain; its full sequence is Carboxy-S-adenosyl-L-methionine synthase (241 aa).

S-adenosyl-L-methionine is bound by residues Tyr38, 63–65 (GCS), 88–89 (DN), 116–117 (DI), Asn131, and Arg198.

It belongs to the class I-like SAM-binding methyltransferase superfamily. Cx-SAM synthase family. As to quaternary structure, homodimer.

It catalyses the reaction prephenate + S-adenosyl-L-methionine = carboxy-S-adenosyl-L-methionine + 3-phenylpyruvate + H2O. Functionally, catalyzes the conversion of S-adenosyl-L-methionine (SAM) to carboxy-S-adenosyl-L-methionine (Cx-SAM). This Haemophilus influenzae (strain 86-028NP) protein is Carboxy-S-adenosyl-L-methionine synthase.